Here is a 50-residue protein sequence, read N- to C-terminus: Nosiheptide precursor (50 aa).

Residues 38–39 (SC) constitute a cross-link (thiazole-4-carboxylic acid (Ser-Cys)). The segment at residues 38 to 46 (SCTTCECCC) is a cross-link (3-hydroxypyridine-2,5-dicarboxylic acid (Ser-Cys) (with S-47)). A cross-link (3-hydroxypyridine-2,5-dicarboxylic acid (Ser-Ser) (with C-46)) is located at residues 38-47 (SCTTCECCCS). A cross-link (thiazole-4-carboxylic acid (Thr-Cys)) is located at residues 41 to 42 (TC). E43 carries the post-translational modification 4-hydroxyglutamate. The thiazole-4-carboxylic acid (Glu-Cys) cross-link spans 43-44 (EC). The segment at residues 43 to 45 (ECC) is a cross-link (2-(cystein-S-ylcarbonyl)-3-methyl-4-(glutam-5-yloxy)methylindole (Glu-Cys)). The segment at residues 45–46 (CC) is a cross-link (thiazole-4-carboxylic acid (Cys-Cys)). A cross-link (thiazole-4-carboxylic acid (Ser-Cys)) is located at residues 47–48 (SC). A 2,3-didehydroalanine (Ser) modification is found at S49. S49 is subject to Serine amide; atypical.

The protein belongs to the thiocillin family. In terms of processing, the amidation of Ser-49 is produced by the oxidative cleavage of Ser-50 rather than of a glycine, as in eukaryotes.

Its function is as follows. Inhibits bacterial protein biosynthesis by binding to ribosomes. Specifically, binds to the complex of 23S rRNA and ribosomal protein L11 (RPLK) in the 50S ribosomal subunit. While allowing a weak binding of elongation factor G (EF-G) to the ribosome and subsequent GTP-hydrolysis, probably impairs conformational changes in both the ribosome and EF-G which are necessary for translocation. In vitro, inhibits Gram-positive bacteria S.aureus strain 209P (MIC=0.0009 ug/ml), S.aureus strain 133 (MIC=0.0019 ug/ml), S.aureus strain B3 (MIC=0.003 ug/ml), S.aureus strain Hb (MIC=0.003 ug/ml), M.citreus strain ATCC 8411 (MIC=0.0038 ug/ml), M.lysodeikticus strain ATCC 4698 (MIC=0.003 ug/ml), S.lutea strain ATCC 9341 (MIC=0.0011 ug/ml), S.faecalis strain ATCC 9790 (MIC=0.0007 ug/ml), S.viridans (MIC=0.0065 ug/ml), S.pyogenes hemolyticus strain Dig7 (MIC=0.00028 ug/ml), D.pneumoniae strain Til (MIC=0.00015 ug/ml), N.catrrhalis (MIC=0.0017 ug/ml), L.casei strain ATCC 6633 (MIC=0.003 ug/ml), B.cereus strain ATCC 6630 (MIC=0.0071 ug/ml) and various isolates of L.monocytogenes. In vitro, inhibits Gram-negative bacterium P.multocida strain A125 (MIC=0.0024 ug/ml) but not M.smegmatis strain ATCC 6630, S.typhimurium, A.aerogenes strain ATCC 8308, P.vulgaris, K.pneumoniae strain ATCC 10031, S.marcescens strain A476, P.aeruginosa strain Bass or B.bronchiseptica strain CN387. Does not inhibit Gram-negative bacterium E.coli strain ATCC 9637 but does inhibit purified ribosomes from E.coli. In vivo, has no systemic effect in mice infected with staphylococci or streptococci when applied orally or subcutaneously. Has a local effect in mice infected subcutaneously or intraperitoneally with staphylococci when applied immediately afterwards. Is not toxic to mice. This chain is Nosiheptide precursor, found in Streptomyces actuosus.